The primary structure comprises 532 residues: Cytochrome P450 714B2 (532 aa).

The Lumenal segment spans residues 1 to 2 (ME). Residues 3–23 (VGMVVVVAAKVLVSLWCVGAC) traverse the membrane as a helical; Signal-anchor for type III membrane protein segment. Residues 24-532 (CLAAYLYRVV…LTRVQGAYRH (509 aa)) lie on the Cytoplasmic side of the membrane. Cys-474 contributes to the heme binding site.

This sequence belongs to the cytochrome P450 family. It depends on heme as a cofactor. In terms of tissue distribution, highly expressed in shoot, spikelet and uppermost internode. Detected in roots, leaves and anthers.

The protein resides in the membrane. Catalyzes the 13-hydroxylation of gibberellins (GAs). Determines the ratio of GA4 and GA1. Converts GA12 into GA53. In Oryza sativa subsp. japonica (Rice), this protein is Cytochrome P450 714B2 (CYP714B2).